The primary structure comprises 354 residues: Polyprenal reductase 1 (354 aa).

The next 6 helical transmembrane spans lie at Pro-11–Ile-31, Phe-78–Phe-98, Tyr-141–Leu-158, Met-176–Ala-196, Pro-235–Leu-255, and Gly-301–Ile-321.

Belongs to the steroid 5-alpha reductase family. Polyprenal reductase subfamily.

It is found in the cell membrane. It catalyses the reaction a di-trans,poly-cis-dolichal + NADP(+) = a di-trans,poly-cis-polyprenal + NADPH + H(+). It participates in protein modification; protein glycosylation. Its function is as follows. Plays a key role in early steps of protein N-linked glycosylation by being involved in the conversion of polyprenol into dolichol. Acts as a polyprenal reductase that mediates the reduction of polyprenal into dolichal in a NADP-dependent mechanism. Dolichols are required for the synthesis of dolichol-linked monosaccharides and the oligosaccharide precursor used for N-glycosylation. The protein is Polyprenal reductase 1 of Oryza sativa subsp. indica (Rice).